The following is a 123-amino-acid chain: MKRSYNFLSNSEKRKLRNRAKLDKSAERLRISIFKSNRHFYVQLINDVKGITLTSASTLDAKIKDVCKGKVNAETIKQVSSLMVERLSGMKLEQQLTFDRGAYKYTGLVSQFAEALRSSGFEF.

This sequence belongs to the universal ribosomal protein uL18 family. Part of the 50S ribosomal subunit; part of the 5S rRNA/L5/L18/L25 subcomplex. Contacts the 5S and 23S rRNAs.

This is one of the proteins that bind and probably mediate the attachment of the 5S RNA into the large ribosomal subunit, where it forms part of the central protuberance. The sequence is that of Large ribosomal subunit protein uL18 from Wolbachia pipientis wMel.